A 388-amino-acid chain; its full sequence is Putrescine N-methyltransferase 1 (388 aa).

Composition is skewed to polar residues over residues 1-14 (MEVI…STIF), 23-39 (GYQN…QNGT), and 46-88 (HQNG…GNEL). Residues 1–88 (MEVISTNTNG…TISHDNGNEL (88 aa)) are disordered. The PABS domain occupies 99–336 (PGWFSEFSAL…GVIGYMLCST (238 aa)). Residues Q130, E205, and 236–237 (DG) contribute to the S-adenosyl-L-methionine site. Residue D255 is the Proton acceptor of the active site. Y324 serves as a coordination point for S-adenosyl-L-methionine.

This sequence belongs to the class I-like SAM-binding methyltransferase superfamily. Spermidine/spermine synthase family. As to expression, mainly expressed in roots.

It catalyses the reaction putrescine + S-adenosyl-L-methionine = N-methylputrescine + S-adenosyl-L-homocysteine + H(+). It participates in alkaloid biosynthesis; nicotine biosynthesis. Involved in the biosynthesis of pyridine alkaloid natural products, leading mainly to the production of anabasine, anatabine, nicotine and nornicotine, effective deterrents against herbivores with antiparasitic and pesticide properties (neurotoxins); nornicotine serves as the precursor in the synthesis of the carcinogen compound N'-nitrosonornicotine (NNN). Methyltransferase that mediates the conversion of putrescine to N-methylputrescine. The protein is Putrescine N-methyltransferase 1 of Nicotiana attenuata (Coyote tobacco).